We begin with the raw amino-acid sequence, 186 residues long: Ribosome-recycling factor (186 aa).

It belongs to the RRF family.

The protein resides in the cytoplasm. Responsible for the release of ribosomes from messenger RNA at the termination of protein biosynthesis. May increase the efficiency of translation by recycling ribosomes from one round of translation to another. The sequence is that of Ribosome-recycling factor from Methylocella silvestris (strain DSM 15510 / CIP 108128 / LMG 27833 / NCIMB 13906 / BL2).